A 709-amino-acid chain; its full sequence is Polyribonucleotide nucleotidyltransferase (709 aa).

Positions 482 and 488 each coordinate Mg(2+). The KH domain occupies 549–608; it reads PRIITMSIDPDKIREVIGPGGKVINKIIAETGVKIDIEDDGRIFIAATDTEAANKAVRII. Residues 618–686 form the S1 motif domain; sequence GKVYTGKVTR…KQGRINLSRK (69 aa).

This sequence belongs to the polyribonucleotide nucleotidyltransferase family. Mg(2+) serves as cofactor.

It localises to the cytoplasm. It catalyses the reaction RNA(n+1) + phosphate = RNA(n) + a ribonucleoside 5'-diphosphate. Functionally, involved in mRNA degradation. Catalyzes the phosphorolysis of single-stranded polyribonucleotides processively in the 3'- to 5'-direction. The sequence is that of Polyribonucleotide nucleotidyltransferase from Heliobacterium modesticaldum (strain ATCC 51547 / Ice1).